Reading from the N-terminus, the 431-residue chain is Histidinol dehydrogenase (431 aa).

The NAD(+) site is built by Tyr130, Gln191, and Asn214. Residues Ser237, Gln261, and His264 each contribute to the substrate site. Zn(2+) is bound by residues Gln261 and His264. Active-site proton acceptor residues include Glu329 and His330. Residues His330, Asp363, Glu417, and His422 each contribute to the substrate site. Asp363 lines the Zn(2+) pocket. His422 contacts Zn(2+).

It belongs to the histidinol dehydrogenase family. Zn(2+) is required as a cofactor.

It carries out the reaction L-histidinol + 2 NAD(+) + H2O = L-histidine + 2 NADH + 3 H(+). It participates in amino-acid biosynthesis; L-histidine biosynthesis; L-histidine from 5-phospho-alpha-D-ribose 1-diphosphate: step 9/9. Its function is as follows. Catalyzes the sequential NAD-dependent oxidations of L-histidinol to L-histidinaldehyde and then to L-histidine. This is Histidinol dehydrogenase from Psychrobacter arcticus (strain DSM 17307 / VKM B-2377 / 273-4).